The chain runs to 126 residues: MSHNQQAAQPSSSRTQVIEREASPGVLTVRGAAEDEDSNVRFTEEVVDNEHMDKKKSKICCIYHPPAEFGESSEEESCGSDDSGPESDEGDIPNARKPKKKNKGKCGGHRDPSPNAYERKPRPKKN.

The span at 1 to 16 (MSHNQQAAQPSSSRTQ) shows a compositional bias: polar residues. The disordered stretch occupies residues 1–126 (MSHNQQAAQP…YERKPRPKKN (126 aa)). Over residues 38–53 (SNVRFTEEVVDNEHMD) the composition is skewed to basic and acidic residues. The segment covering 71–91 (ESSEEESCGSDDSGPESDEGD) has biased composition (acidic residues). A compositionally biased stretch (basic residues) spans 96–107 (RKPKKKNKGKCG). The span at 108 to 120 (GHRDPSPNAYERK) shows a compositional bias: basic and acidic residues.

The protein belongs to the YPI1 family.

It localises to the nucleus. Its function is as follows. Regulator of type 1 phosphatases which maintains protein phosphatase activity under strict control. In Yarrowia lipolytica (strain CLIB 122 / E 150) (Yeast), this protein is Type 1 phosphatases regulator YPI1 (YPI1).